The following is a 539-amino-acid chain: Sporozoite-associated protein (539 aa).

N-linked (GlcNAc...) asparagine glycans are attached at residues asparagine 31, asparagine 90, asparagine 102, asparagine 149, and asparagine 167. The segment at 126–153 is disordered; it reads LTQSPPPAAAPQSPSPRAILSPRNVSKT. The segment covering 192–215 has biased composition (low complexity); the sequence is VVAEKSNTPTTPKTTPNGKWTGKN. The tract at residues 192–231 is disordered; the sequence is VVAEKSNTPTTPKTTPNGKWTGKNANATIETSNTDHTPPS. Residues 216–228 show a composition bias toward polar residues; the sequence is ANATIETSNTDHT. 3 N-linked (GlcNAc...) asparagine glycosylation sites follow: asparagine 217, asparagine 271, and asparagine 288. The disordered stretch occupies residues 303-355; the sequence is TLISRAQDDKPGTKGGSDETSSSTAASNERQPMFPNDNDDDDIDQTYCPGVES. Polar residues predominate over residues 320-332; it reads DETSSSTAASNER. 2 N-linked (GlcNAc...) asparagine glycosylation sites follow: asparagine 427 and asparagine 503.

In terms of tissue distribution, saliva (at protein level). Female salivary gland. Female midgut.

The protein resides in the secreted. Its function is as follows. Binds heparan sulfate proteoglycans present on the mammalian cell surface. Modulates host immune responses at the site of inoculation via decreasing the expression of TNF-alpha/TNF, IL-1beta/IL1B, IFN-gamma/IFNG, IL4, MMP9, TGF-beta and ICAM1. Functionally, (Microbial infection) Interacts with the surface of Plasmodium berghei sporozoites. Promotes Plasmodium berghei transmission to the mouse host. Does not affect Plasmodium berghei sporozoite viability. (Microbial infection) Interacts with the surface of Plasmodium falciparum sporozoites. In Anopheles gambiae (African malaria mosquito), this protein is Sporozoite-associated protein.